A 209-amino-acid polypeptide reads, in one-letter code: Ribosomal RNA large subunit methyltransferase E (209 aa).

The S-adenosyl-L-methionine site is built by G63, W65, D83, D99, and D124. Residue K164 is the Proton acceptor of the active site.

This sequence belongs to the class I-like SAM-binding methyltransferase superfamily. RNA methyltransferase RlmE family.

It localises to the cytoplasm. It carries out the reaction uridine(2552) in 23S rRNA + S-adenosyl-L-methionine = 2'-O-methyluridine(2552) in 23S rRNA + S-adenosyl-L-homocysteine + H(+). Functionally, specifically methylates the uridine in position 2552 of 23S rRNA at the 2'-O position of the ribose in the fully assembled 50S ribosomal subunit. This Shewanella halifaxensis (strain HAW-EB4) protein is Ribosomal RNA large subunit methyltransferase E.